Here is a 368-residue protein sequence, read N- to C-terminus: MLYYLLKYINDAFDPPGLGVIEFLTFRASAAAVTSLLICLVAGPAFIKYLKGRIIEPVKEEAPPEHRKKKELPTMGGIMIIFAIEVSVFLWARFDDPHVWLIMVAVFWMGVIGFLDDYMKVVLKVKGGLPPRYKLIGQVLLGLFIGLYTWFDPAFSVLLSTTTVPFFKNLTIDYGIFYIPVVIFIITAVSNAVNLTDGLDGLASGSSAIVVFALGGFAYLAGNAVYASYLKIPFIPGGGEIAVVSMAIVMACVGFLWFNSNPAEIIMGDTGSLALGSAIAVIALLIKQELLLPVLAGIFFLETLSVSLQVLYFKYTKMRFGQGRRIFLMAPLHHHFQLKGWAEQKIVIRFWIVTVLFFLASLMTLKLR.

9 consecutive transmembrane segments (helical) span residues 30-50 (AAAV…IKYL), 72-92 (LPTM…FLWA), 99-119 (VWLI…DDYM), 139-159 (VLLG…SVLL), 170-190 (LTID…TAVS), 201-221 (GLAS…AYLA), 238-258 (GGEI…FLWF), 264-286 (EIIM…ALLI), and 345-365 (KIVI…LMTL).

This sequence belongs to the glycosyltransferase 4 family. MraY subfamily. The cofactor is Mg(2+).

Its subcellular location is the cell inner membrane. The catalysed reaction is UDP-N-acetyl-alpha-D-muramoyl-L-alanyl-gamma-D-glutamyl-meso-2,6-diaminopimeloyl-D-alanyl-D-alanine + di-trans,octa-cis-undecaprenyl phosphate = di-trans,octa-cis-undecaprenyl diphospho-N-acetyl-alpha-D-muramoyl-L-alanyl-D-glutamyl-meso-2,6-diaminopimeloyl-D-alanyl-D-alanine + UMP. It participates in cell wall biogenesis; peptidoglycan biosynthesis. In terms of biological role, catalyzes the initial step of the lipid cycle reactions in the biosynthesis of the cell wall peptidoglycan: transfers peptidoglycan precursor phospho-MurNAc-pentapeptide from UDP-MurNAc-pentapeptide onto the lipid carrier undecaprenyl phosphate, yielding undecaprenyl-pyrophosphoryl-MurNAc-pentapeptide, known as lipid I. The protein is Phospho-N-acetylmuramoyl-pentapeptide-transferase of Chlorobium limicola (strain DSM 245 / NBRC 103803 / 6330).